The sequence spans 500 residues: MSIFLCFLLLLPLSLILFKKLLPSKGKLPPGPIGLPIIGNLHQLGKLLYKSFHKISQEYGPVVLLRLGVVPVIVVSSKEGAEEVLKTHDLETCTRPKTAATGLFTYNFKDIGFAPFGDDWREMRKITTLELFSVKKLKSFRYIREEESELLVKKISKSVDETQNSSVDLRKVLFSFTASIICRLAFGQNFHQCDFVDMEKVEELVLESEANLGTFAFADFFPGGWLIDRISGQHSRVNKAFYKLTNFYKHVIDDHLKTGQPQDHSDIVSVMLDMINKPTKADSFKVTYDHLKGVMSDIFLAGVNGGANTMIWTLTELSRHPRVMKKLQEEIRAMLGPNKERITEEDLEKVEYLKLVMVETFRLHPPAPLLLPRLTMSDIKIQGYNIPKNTMIQINTYAIGRDPKYWKQPGEFIPERFLDSPIDYKGQHFELLPFGAGRRICPGMATGITMVELGLLNLLYFFDWSLPNGMTIEDIDMEEDEGFAIAKKVPLVLIQTSHRW.

A helical transmembrane segment spans residues 3–23 (IFLCFLLLLPLSLILFKKLLP). Position 441 (Cys-441) interacts with heme.

Belongs to the cytochrome P450 family. Heme is required as a cofactor.

The protein resides in the membrane. This Arabidopsis thaliana (Mouse-ear cress) protein is Cytochrome P450 71B38 (CYP71B38).